A 580-amino-acid polypeptide reads, in one-letter code: Glutamine--tRNA ligase (580 aa).

The short motif at 41–51 (PEPNGYLHIGH) is the 'HIGH' region element. ATP contacts are provided by residues 42–44 (EPN) and 48–54 (HIGHAKA). Residues Asp-74 and Tyr-218 each coordinate L-glutamine. ATP is bound by residues Thr-237, 285 to 286 (RL), and 293 to 295 (MSK). The 'KMSKS' region motif lies at 292–296 (VMSKR).

This sequence belongs to the class-I aminoacyl-tRNA synthetase family. Monomer.

The protein resides in the cytoplasm. It catalyses the reaction tRNA(Gln) + L-glutamine + ATP = L-glutaminyl-tRNA(Gln) + AMP + diphosphate. This Xylella fastidiosa (strain M12) protein is Glutamine--tRNA ligase.